Here is a 357-residue protein sequence, read N- to C-terminus: UDP-N-acetylglucosamine--N-acetylmuramyl-(pentapeptide) pyrophosphoryl-undecaprenol N-acetylglucosamine transferase (357 aa).

Residues 13-15 (SAG), Arg166, Ser197, and Gln292 contribute to the UDP-N-acetyl-alpha-D-glucosamine site.

This sequence belongs to the glycosyltransferase 28 family. MurG subfamily.

The protein resides in the cell membrane. The catalysed reaction is di-trans,octa-cis-undecaprenyl diphospho-N-acetyl-alpha-D-muramoyl-L-alanyl-D-glutamyl-meso-2,6-diaminopimeloyl-D-alanyl-D-alanine + UDP-N-acetyl-alpha-D-glucosamine = di-trans,octa-cis-undecaprenyl diphospho-[N-acetyl-alpha-D-glucosaminyl-(1-&gt;4)]-N-acetyl-alpha-D-muramoyl-L-alanyl-D-glutamyl-meso-2,6-diaminopimeloyl-D-alanyl-D-alanine + UDP + H(+). It functions in the pathway cell wall biogenesis; peptidoglycan biosynthesis. Its function is as follows. Cell wall formation. Catalyzes the transfer of a GlcNAc subunit on undecaprenyl-pyrophosphoryl-MurNAc-pentapeptide (lipid intermediate I) to form undecaprenyl-pyrophosphoryl-MurNAc-(pentapeptide)GlcNAc (lipid intermediate II). This is UDP-N-acetylglucosamine--N-acetylmuramyl-(pentapeptide) pyrophosphoryl-undecaprenol N-acetylglucosamine transferase from Clostridium novyi (strain NT).